The following is a 156-amino-acid chain: Small ribosomal subunit protein uS7 (156 aa).

This sequence belongs to the universal ribosomal protein uS7 family. Part of the 30S ribosomal subunit. Contacts proteins S9 and S11.

Its function is as follows. One of the primary rRNA binding proteins, it binds directly to 16S rRNA where it nucleates assembly of the head domain of the 30S subunit. Is located at the subunit interface close to the decoding center, probably blocks exit of the E-site tRNA. The polypeptide is Small ribosomal subunit protein uS7 (Brucella abortus (strain S19)).